The primary structure comprises 494 residues: Glycerol kinase (494 aa).

Threonine 13 serves as a coordination point for ADP. ATP-binding residues include threonine 13, threonine 14, and serine 15. Threonine 13 provides a ligand contact to sn-glycerol 3-phosphate. ADP is bound at residue arginine 17. The sn-glycerol 3-phosphate site is built by arginine 83, glutamate 84, tyrosine 135, and aspartate 244. Residues arginine 83, glutamate 84, tyrosine 135, aspartate 244, and glutamine 245 each contribute to the glycerol site. ADP-binding residues include threonine 266 and glycine 309. Positions 266, 309, 313, and 410 each coordinate ATP. Glycine 410 and asparagine 414 together coordinate ADP.

This sequence belongs to the FGGY kinase family.

The catalysed reaction is glycerol + ATP = sn-glycerol 3-phosphate + ADP + H(+). It participates in polyol metabolism; glycerol degradation via glycerol kinase pathway; sn-glycerol 3-phosphate from glycerol: step 1/1. With respect to regulation, inhibited by fructose 1,6-bisphosphate (FBP). In terms of biological role, key enzyme in the regulation of glycerol uptake and metabolism. Catalyzes the phosphorylation of glycerol to yield sn-glycerol 3-phosphate. The polypeptide is Glycerol kinase (Shewanella oneidensis (strain ATCC 700550 / JCM 31522 / CIP 106686 / LMG 19005 / NCIMB 14063 / MR-1)).